The sequence spans 274 residues: MAIVKCKPTSPGRRHVVKVVNPELHKGKPYAPLLEKSSKTGGRNNNGRITTRHIGGGHKQHYRLIDFKRNKDGIPAVVERLEYDPNRSANIALVLYKDGERRYILAPKGLKAGDQIQSGVDASIKTGNALPMRNIPVGSTVHNVEMKPGKGGQLARSAGAYVQIVARDGSYVTLRLRSGEMRKVLSDCRATLGEVGNAEHMLRVLGKAGASRWRGIRPTVRGTAMNPVDHPHGGGEGRNFGKHPVTPWGVQTKGKKTRSNKRTDQFIVRRRTKK.

Disordered stretches follow at residues 28–54 and 221–274; these read KPYA…TRHI and RGTA…RTKK. Over residues 39 to 49 the composition is skewed to polar residues; that stretch reads KTGGRNNNGRI.

The protein belongs to the universal ribosomal protein uL2 family. In terms of assembly, part of the 50S ribosomal subunit. Forms a bridge to the 30S subunit in the 70S ribosome.

Its function is as follows. One of the primary rRNA binding proteins. Required for association of the 30S and 50S subunits to form the 70S ribosome, for tRNA binding and peptide bond formation. It has been suggested to have peptidyltransferase activity; this is somewhat controversial. Makes several contacts with the 16S rRNA in the 70S ribosome. The sequence is that of Large ribosomal subunit protein uL2 from Photorhabdus laumondii subsp. laumondii (strain DSM 15139 / CIP 105565 / TT01) (Photorhabdus luminescens subsp. laumondii).